Consider the following 205-residue polypeptide: Imidazole glycerol phosphate synthase subunit HisH (205 aa).

Positions 1-205 (MITIVDYQMG…RFATAPVEVA (205 aa)) constitute a Glutamine amidotransferase type-1 domain. The active-site Nucleophile is cysteine 79. Residues histidine 182 and glutamate 184 contribute to the active site.

In terms of assembly, heterodimer of HisH and HisF.

It is found in the cytoplasm. It catalyses the reaction 5-[(5-phospho-1-deoxy-D-ribulos-1-ylimino)methylamino]-1-(5-phospho-beta-D-ribosyl)imidazole-4-carboxamide + L-glutamine = D-erythro-1-(imidazol-4-yl)glycerol 3-phosphate + 5-amino-1-(5-phospho-beta-D-ribosyl)imidazole-4-carboxamide + L-glutamate + H(+). It carries out the reaction L-glutamine + H2O = L-glutamate + NH4(+). It participates in amino-acid biosynthesis; L-histidine biosynthesis; L-histidine from 5-phospho-alpha-D-ribose 1-diphosphate: step 5/9. IGPS catalyzes the conversion of PRFAR and glutamine to IGP, AICAR and glutamate. The HisH subunit catalyzes the hydrolysis of glutamine to glutamate and ammonia as part of the synthesis of IGP and AICAR. The resulting ammonia molecule is channeled to the active site of HisF. The sequence is that of Imidazole glycerol phosphate synthase subunit HisH from Rhodopirellula baltica (strain DSM 10527 / NCIMB 13988 / SH1).